The primary structure comprises 174 residues: Adenine phosphoribosyltransferase (174 aa).

It belongs to the purine/pyrimidine phosphoribosyltransferase family. Homodimer.

Its subcellular location is the cytoplasm. The catalysed reaction is AMP + diphosphate = 5-phospho-alpha-D-ribose 1-diphosphate + adenine. The protein operates within purine metabolism; AMP biosynthesis via salvage pathway; AMP from adenine: step 1/1. Catalyzes a salvage reaction resulting in the formation of AMP, that is energically less costly than de novo synthesis. This is Adenine phosphoribosyltransferase from Phocaeicola vulgatus (strain ATCC 8482 / DSM 1447 / JCM 5826 / CCUG 4940 / NBRC 14291 / NCTC 11154) (Bacteroides vulgatus).